A 302-amino-acid polypeptide reads, in one-letter code: F-box protein SKIP19 (302 aa).

The region spanning 16–63 is the F-box domain; that stretch reads STNWTELPPELTSAILHRLGAIEILENAQKVCRSWRRVCKDPSMWRKI.

As to quaternary structure, part of a SCF (ASK-cullin-F-box) protein ligase complex. Interacts with CUL1 and SPK1B/ASK2.

The protein localises to the nucleus. It participates in protein modification; protein ubiquitination. Its function is as follows. Component of SCF(ASK-cullin-F-box) E3 ubiquitin ligase complexes, which may mediate the ubiquitination and subsequent proteasomal degradation of target proteins. In Arabidopsis thaliana (Mouse-ear cress), this protein is F-box protein SKIP19 (SKIP19).